We begin with the raw amino-acid sequence, 183 residues long: Small ribosomal subunit protein uS4c (183 aa).

Positions 82 to 143 (MRLDNILFRL…KQRSKALIQN (62 aa)) constitute an S4 RNA-binding domain.

Belongs to the universal ribosomal protein uS4 family. Part of the 30S ribosomal subunit. Contacts protein S5. The interaction surface between S4 and S5 is involved in control of translational fidelity.

The protein localises to the plastid. Its subcellular location is the chloroplast. Its function is as follows. One of the primary rRNA binding proteins, it binds directly to 16S rRNA where it nucleates assembly of the body of the 30S subunit. With S5 and S12 plays an important role in translational accuracy. This chain is Small ribosomal subunit protein uS4c (rps4), found in Freesia sp. (strain Lejeune 1997).